Here is a 938-residue protein sequence, read N- to C-terminus: Isoleucine--tRNA ligase (938 aa).

Residues 58 to 68 (PYANGNIHMGH) carry the 'HIGH' region motif. Glu-566 lines the L-isoleucyl-5'-AMP pocket. The short motif at 607–611 (KMSKS) is the 'KMSKS' region element. Lys-610 is a binding site for ATP. Zn(2+) is bound by residues Cys-906, Cys-909, Cys-926, and Cys-929.

This sequence belongs to the class-I aminoacyl-tRNA synthetase family. IleS type 1 subfamily. In terms of assembly, monomer. The cofactor is Zn(2+).

The protein localises to the cytoplasm. It catalyses the reaction tRNA(Ile) + L-isoleucine + ATP = L-isoleucyl-tRNA(Ile) + AMP + diphosphate. Functionally, catalyzes the attachment of isoleucine to tRNA(Ile). As IleRS can inadvertently accommodate and process structurally similar amino acids such as valine, to avoid such errors it has two additional distinct tRNA(Ile)-dependent editing activities. One activity is designated as 'pretransfer' editing and involves the hydrolysis of activated Val-AMP. The other activity is designated 'posttransfer' editing and involves deacylation of mischarged Val-tRNA(Ile). The sequence is that of Isoleucine--tRNA ligase from Nitratidesulfovibrio vulgaris (strain DP4) (Desulfovibrio vulgaris).